Reading from the N-terminus, the 168-residue chain is MAADDYFSLFGLPSKFAIDAQALEEAWRLVAARVHPDRYATASAAERRVAMQWAARANEAYRLLRDPMLRARYLCESAGIDLQTESNTAMAPAFLMQQMEWREMLDDARHDERARAALGEELEQAREAMRASLAELIDTRQDYAAAGQKVREWMFIEKLAQELAAVQP.

The region spanning 5–77 (DYFSLFGLPS…MLRARYLCES (73 aa)) is the J domain.

It belongs to the HscB family. As to quaternary structure, interacts with HscA and stimulates its ATPase activity.

Functionally, co-chaperone involved in the maturation of iron-sulfur cluster-containing proteins. Seems to help targeting proteins to be folded toward HscA. The sequence is that of Co-chaperone protein HscB homolog from Bordetella avium (strain 197N).